The sequence spans 512 residues: Maturase K (512 aa).

This sequence belongs to the intron maturase 2 family. MatK subfamily.

The protein localises to the plastid. The protein resides in the chloroplast. Functionally, usually encoded in the trnK tRNA gene intron. Probably assists in splicing its own and other chloroplast group II introns. This is Maturase K from Oenothera glazioviana (Large-flowered evening primrose).